The chain runs to 485 residues: Protein nucleotidyltransferase YdiU (485 aa).

G90, G92, R93, K113, D125, G126, R176, and R183 together coordinate ATP. Catalysis depends on D252, which acts as the Proton acceptor. Mg(2+) is bound by residues N253 and D262. D262 provides a ligand contact to ATP.

This sequence belongs to the SELO family. Mg(2+) is required as a cofactor. Mn(2+) serves as cofactor.

The catalysed reaction is L-seryl-[protein] + ATP = 3-O-(5'-adenylyl)-L-seryl-[protein] + diphosphate. It carries out the reaction L-threonyl-[protein] + ATP = 3-O-(5'-adenylyl)-L-threonyl-[protein] + diphosphate. It catalyses the reaction L-tyrosyl-[protein] + ATP = O-(5'-adenylyl)-L-tyrosyl-[protein] + diphosphate. The enzyme catalyses L-histidyl-[protein] + UTP = N(tele)-(5'-uridylyl)-L-histidyl-[protein] + diphosphate. The catalysed reaction is L-seryl-[protein] + UTP = O-(5'-uridylyl)-L-seryl-[protein] + diphosphate. It carries out the reaction L-tyrosyl-[protein] + UTP = O-(5'-uridylyl)-L-tyrosyl-[protein] + diphosphate. Its function is as follows. Nucleotidyltransferase involved in the post-translational modification of proteins. It can catalyze the addition of adenosine monophosphate (AMP) or uridine monophosphate (UMP) to a protein, resulting in modifications known as AMPylation and UMPylation. This chain is Protein nucleotidyltransferase YdiU, found in Aliivibrio fischeri (strain MJ11) (Vibrio fischeri).